We begin with the raw amino-acid sequence, 282 residues long: MKLAVITDSTATLPIDLKQDKAIFSLDIPVIIDDETYFEGRNLSIDDFYQKMADSQNLPKTSQPSLSELDNLLGLLSSKGYTHVIGLFLAGGISGFWQNIQFLAEEHPEIEMAFPDSKITSAPLGSMVKNVLDWSRQGMTFQAILNKLQEQIDRTTAFIMVDDLNHLVKGGRLSNGSALLGNLLSIKPILRFDEEGKIVVYEKVRTEKKAMKRLVEILNDLIADGQYNVSIIHSKAQDKADYLKRLLQDSGYQYDIEEVHFGAVIATHLGEGAIAFGVTPRL.

The region spanning 3 to 280 (LAVITDSTAT…EGAIAFGVTP (278 aa)) is the DegV domain. Positions 61 and 94 each coordinate hexadecanoate.

In terms of biological role, may bind long-chain fatty acids, such as palmitate, and may play a role in lipid transport or fatty acid metabolism. The polypeptide is DegV domain-containing protein M6_Spy0690 (Streptococcus pyogenes serotype M6 (strain ATCC BAA-946 / MGAS10394)).